The sequence spans 460 residues: Bifunctional protein GlmU (460 aa).

The pyrophosphorylase stretch occupies residues 1–229; it reads MSHYAIILAA…FEESLGVNDR (229 aa). UDP-N-acetyl-alpha-D-glucosamine contacts are provided by residues 8–11, K22, Q72, and 77–78; these read LAAG and GT. D102 lines the Mg(2+) pocket. Positions 139, 154, 169, and 227 each coordinate UDP-N-acetyl-alpha-D-glucosamine. N227 is a Mg(2+) binding site. The interval 230–250 is linker; sequence VALATAEDVMRRRINKAHMIN. The segment at 251–460 is N-acetyltransferase; the sequence is GVTFQNPNAT…KKPHHPSQQK (210 aa). UDP-N-acetyl-alpha-D-glucosamine contacts are provided by R332 and K350. The Proton acceptor role is filled by H362. 2 residues coordinate UDP-N-acetyl-alpha-D-glucosamine: Y365 and N376. Acetyl-CoA is bound by residues A379, 385–386, S404, A422, and R439; that span reads NY.

It in the N-terminal section; belongs to the N-acetylglucosamine-1-phosphate uridyltransferase family. In the C-terminal section; belongs to the transferase hexapeptide repeat family. Homotrimer. It depends on Mg(2+) as a cofactor.

Its subcellular location is the cytoplasm. The catalysed reaction is alpha-D-glucosamine 1-phosphate + acetyl-CoA = N-acetyl-alpha-D-glucosamine 1-phosphate + CoA + H(+). The enzyme catalyses N-acetyl-alpha-D-glucosamine 1-phosphate + UTP + H(+) = UDP-N-acetyl-alpha-D-glucosamine + diphosphate. It functions in the pathway nucleotide-sugar biosynthesis; UDP-N-acetyl-alpha-D-glucosamine biosynthesis; N-acetyl-alpha-D-glucosamine 1-phosphate from alpha-D-glucosamine 6-phosphate (route II): step 2/2. It participates in nucleotide-sugar biosynthesis; UDP-N-acetyl-alpha-D-glucosamine biosynthesis; UDP-N-acetyl-alpha-D-glucosamine from N-acetyl-alpha-D-glucosamine 1-phosphate: step 1/1. The protein operates within bacterial outer membrane biogenesis; LPS lipid A biosynthesis. In terms of biological role, catalyzes the last two sequential reactions in the de novo biosynthetic pathway for UDP-N-acetylglucosamine (UDP-GlcNAc). The C-terminal domain catalyzes the transfer of acetyl group from acetyl coenzyme A to glucosamine-1-phosphate (GlcN-1-P) to produce N-acetylglucosamine-1-phosphate (GlcNAc-1-P), which is converted into UDP-GlcNAc by the transfer of uridine 5-monophosphate (from uridine 5-triphosphate), a reaction catalyzed by the N-terminal domain. This is Bifunctional protein GlmU from Streptococcus thermophilus (strain CNRZ 1066).